A 594-amino-acid chain; its full sequence is Arginine--tRNA ligase (594 aa).

The 'HIGH' region motif lies at Ala139–His149.

This sequence belongs to the class-I aminoacyl-tRNA synthetase family. In terms of assembly, monomer.

It localises to the cytoplasm. It catalyses the reaction tRNA(Arg) + L-arginine + ATP = L-arginyl-tRNA(Arg) + AMP + diphosphate. The polypeptide is Arginine--tRNA ligase (Burkholderia thailandensis (strain ATCC 700388 / DSM 13276 / CCUG 48851 / CIP 106301 / E264)).